A 510-amino-acid polypeptide reads, in one-letter code: Probable lysine--tRNA ligase, cytoplasmic (510 aa).

Belongs to the class-II aminoacyl-tRNA synthetase family. Homodimer.

The protein resides in the cytoplasm. The catalysed reaction is tRNA(Lys) + L-lysine + ATP = L-lysyl-tRNA(Lys) + AMP + diphosphate. The sequence is that of Probable lysine--tRNA ligase, cytoplasmic from Encephalitozoon cuniculi (strain GB-M1) (Microsporidian parasite).